Reading from the N-terminus, the 152-residue chain is Aminoglycoside N(6')-acetyltransferase type 1 (152 aa).

In terms of domain architecture, N-acetyltransferase spans proline 5–leucine 152. Residues tryptophan 26, tyrosine 73, glutamate 86, and aspartate 122 each coordinate substrate. Position 127 (asparagine 127) interacts with acetyl-CoA.

As to quaternary structure, homodimer.

It carries out the reaction kanamycin B + acetyl-CoA = N(6')-acetylkanamycin B + CoA + H(+). In terms of biological role, catalyzes the transfer of an acetyl group from acetyl-CoA to the 6'-amino group of aminoglycoside molecules conferring resistance to antibiotics containing the purpurosamine ring including amikacin. This is Aminoglycoside N(6')-acetyltransferase type 1 (aacA7) from Klebsiella aerogenes (Enterobacter aerogenes).